Here is a 249-residue protein sequence, read N- to C-terminus: MPLLEFEPLQEGVLIKRYKRFLADIELSNGEVVTAHCANTGPMTGVLIPGQRVRLRHAPSPKRKLAWTWEQAEVPGADGQPCWAGINTALPNRLIRATIEAGCLSEQLGAISNIRAEVAYGTNRRSRIDLLLTPGESNPDQRLIYLEVKNTTWTDGTTALFPDTVTERGQKHLIELMGVLPEARAVLVPCLSRPDVMDFAPGDEADPRYGSLFRDALEAGVEVLPCCFRYQSNEISWQGLRPLKKFQNL.

The protein belongs to the SfsA family.

The polypeptide is Sugar fermentation stimulation protein homolog (Synechococcus sp. (strain CC9902)).